The chain runs to 268 residues: Ethylene-responsive transcription factor ERN1 (268 aa).

The span at 1-21 shows a compositional bias: polar residues; the sequence is MEIQFQQPNMQNQKAGISVTN. Residues 1 to 36 form a disordered region; that stretch reads MEIQFQQPNMQNQKAGISVTNKGGKFKGRNRNSNNT. The AP2/ERF DNA-binding region spans 38–95; the sequence is KFVGVRQRPSGRWVAEIKDTTQKIRMWLGTFETAEEAARAYDEAACLLRGSNTRTNFI. A disordered region spans residues 114 to 154; sequence NRKGDKKQEDGAVASAPSNSKTTISNTSTITSNDDNKESTL. Over residues 131–146 the composition is skewed to low complexity; that stretch reads SNSKTTISNTSTITSN.

Belongs to the AP2/ERF transcription factor family. ERF subfamily. In terms of tissue distribution, expressed in roots, root hairs and leaves. Expressed in root epidermis and root hairs.

The protein resides in the nucleus. In terms of biological role, transcription factor involved in symbiotic nodule signaling in response to rhizobial Nod factors (NFs). Binds to the GCC-box (NF-responsive box) of ENOD11 promoter. Acts as a transcriptional activator of NF-responsive box-containing target gene promoters in root hairs. Functions as a transcriptional regulator required for root infection by symbiotic rhizobia, infection thread (IT) formation and maintenance, and nodule development. Necessary for NF-induced gene expression and spontaneous nodulation activated by CCAMK. Functions downstream of CCAMK to activate nodulation gene expression. Involved in early stages of root nodule development. Functions redundantly with ERN2. Is essential with ERN2 for the initiation of root hair infection, and nodule organogenesis and development. Required for accurate expression of the NF signaling genes ENOD11 and ENOD12. This chain is Ethylene-responsive transcription factor ERN1, found in Medicago truncatula (Barrel medic).